The following is a 508-amino-acid chain: Probable protein kinase UbiB (508 aa).

The region spanning 118–494 (DFDLKPVASA…QKRQNFLLLL (377 aa)) is the Protein kinase domain. ATP-binding positions include 124 to 132 (VASASVAQV) and K151. D286 acts as the Proton acceptor in catalysis. The chain crosses the membrane as a helical span at residues 488–508 (QNFLLLLIAILLAALLAKSLL).

Belongs to the ABC1 family. UbiB subfamily.

Its subcellular location is the cell inner membrane. It participates in cofactor biosynthesis; ubiquinone biosynthesis [regulation]. In terms of biological role, is probably a protein kinase regulator of UbiI activity which is involved in aerobic coenzyme Q (ubiquinone) biosynthesis. The polypeptide is Probable protein kinase UbiB (Chromobacterium violaceum (strain ATCC 12472 / DSM 30191 / JCM 1249 / CCUG 213 / NBRC 12614 / NCIMB 9131 / NCTC 9757 / MK)).